The primary structure comprises 343 residues: tRNA N6-adenosine threonylcarbamoyltransferase (343 aa).

Residues histidine 108 and histidine 112 each contribute to the Fe cation site. Substrate is bound by residues 129 to 133 (LISGG), aspartate 161, glutamate 178, and serine 258. Aspartate 286 provides a ligand contact to Fe cation.

This sequence belongs to the KAE1 / TsaD family. Fe(2+) is required as a cofactor.

The protein resides in the cytoplasm. It catalyses the reaction L-threonylcarbamoyladenylate + adenosine(37) in tRNA = N(6)-L-threonylcarbamoyladenosine(37) in tRNA + AMP + H(+). In terms of biological role, required for the formation of a threonylcarbamoyl group on adenosine at position 37 (t(6)A37) in tRNAs that read codons beginning with adenine. Is probably involved in the transfer of the threonylcarbamoyl moiety of threonylcarbamoyl-AMP (TC-AMP) to the N6 group of A37. This is tRNA N6-adenosine threonylcarbamoyltransferase from Pyrobaculum aerophilum (strain ATCC 51768 / DSM 7523 / JCM 9630 / CIP 104966 / NBRC 100827 / IM2).